The chain runs to 286 residues: Toxin zeta (286 aa).

G39–T46 lines the ATP pocket. A disordered region spans residues M249 to I286. Positions P272–I286 are enriched in pro residues.

The protein belongs to the zeta toxin family. In the presence of the epsilon antitoxin, forms an inactive PezA(2)PezT(2) heterotetramer.

It catalyses the reaction UDP-N-acetyl-alpha-D-glucosamine + ATP = UDP-N-acetyl-alpha-D-glucosamine 3'-phosphate + ADP + H(+). In terms of biological role, toxic component of a type II toxin-antitoxin (TA) system. Phosphorylates UDP-N-acetyl-D-glucosamine (UNAG) on the 3'-hydroxyl group of the N-acetyl-D-glucosamine moiety, yielding UNAG-3P. UNAG-3P inhibits MurA, the first committed step in cell wall synthesis, which is then blocked. Phosphorylation is inhibited by cognate epsilon antitoxin. Part of a postsegregational killing (PSK) system involved in the killing of plasmid-free cells. The zeta toxin induces programmed cell death. The protein is Toxin zeta of Enterococcus hirae.